We begin with the raw amino-acid sequence, 223 residues long: Translation initiation factor 6 (223 aa).

This sequence belongs to the eIF-6 family.

In terms of biological role, binds to the 50S ribosomal subunit and prevents its association with the 30S ribosomal subunit to form the 70S initiation complex. The protein is Translation initiation factor 6 of Sulfolobus acidocaldarius (strain ATCC 33909 / DSM 639 / JCM 8929 / NBRC 15157 / NCIMB 11770).